Here is a 230-residue protein sequence, read N- to C-terminus: Maleylacetoacetate isomerase (230 aa).

In terms of domain architecture, GST N-terminal spans 7–95 (LRVTLYTYFR…YLDEAFPDNP (89 aa)). Glutathione contacts are provided by residues 17 to 22 (SSCSAR), Gln46, Val60, 79 to 80 (QS), Gln123, and 127 to 129 (NLR). In terms of domain architecture, GST C-terminal spans 104–226 (NPQQRALVRS…HWRTQQDTPT (123 aa)).

It belongs to the GST superfamily. Zeta family. Requires glutathione as cofactor.

The protein localises to the cytoplasm. It catalyses the reaction 4-maleylacetoacetate = 4-fumarylacetoacetate. It functions in the pathway amino-acid degradation; L-phenylalanine degradation; acetoacetate and fumarate from L-phenylalanine: step 5/6. This chain is Maleylacetoacetate isomerase (maiA), found in Emericella nidulans (strain FGSC A4 / ATCC 38163 / CBS 112.46 / NRRL 194 / M139) (Aspergillus nidulans).